The following is a 642-amino-acid chain: Threonine--tRNA ligase (642 aa).

The TGS domain occupies 1-61 (MPVITLPDGS…ENDATLAIIT (61 aa)). The catalytic stretch occupies residues 243 to 534 (DHRKIGKQLD…LTEEFAGFFP (292 aa)). Residues Cys334, His385, and His511 each contribute to the Zn(2+) site.

Belongs to the class-II aminoacyl-tRNA synthetase family. As to quaternary structure, homodimer. The cofactor is Zn(2+).

The protein resides in the cytoplasm. It carries out the reaction tRNA(Thr) + L-threonine + ATP = L-threonyl-tRNA(Thr) + AMP + diphosphate + H(+). Functionally, catalyzes the attachment of threonine to tRNA(Thr) in a two-step reaction: L-threonine is first activated by ATP to form Thr-AMP and then transferred to the acceptor end of tRNA(Thr). Also edits incorrectly charged L-seryl-tRNA(Thr). The sequence is that of Threonine--tRNA ligase from Salmonella dublin (strain CT_02021853).